A 382-amino-acid polypeptide reads, in one-letter code: S-adenosylmethionine synthase (382 aa).

An ATP-binding site is contributed by histidine 16. Aspartate 18 is a binding site for Mg(2+). Position 44 (glutamate 44) interacts with K(+). 2 residues coordinate L-methionine: glutamate 57 and glutamine 100. Positions 100 to 110 (QSPDIAQGVDN) are flexible loop. Residues 165–167 (DAK), 231–232 (RF), aspartate 240, 246–247 (RK), and lysine 267 contribute to the ATP site. Aspartate 240 is an L-methionine binding site. Lysine 271 is an L-methionine binding site.

This sequence belongs to the AdoMet synthase family. Homotetramer; dimer of dimers. Requires Mg(2+) as cofactor. It depends on K(+) as a cofactor.

It is found in the cytoplasm. It carries out the reaction L-methionine + ATP + H2O = S-adenosyl-L-methionine + phosphate + diphosphate. The protein operates within amino-acid biosynthesis; S-adenosyl-L-methionine biosynthesis; S-adenosyl-L-methionine from L-methionine: step 1/1. In terms of biological role, catalyzes the formation of S-adenosylmethionine (AdoMet) from methionine and ATP. The overall synthetic reaction is composed of two sequential steps, AdoMet formation and the subsequent tripolyphosphate hydrolysis which occurs prior to release of AdoMet from the enzyme. The polypeptide is S-adenosylmethionine synthase (Legionella pneumophila (strain Lens)).